The sequence spans 820 residues: Depolymerase, capsule KN1-specific (820 aa).

The protein in the N-terminal section; belongs to the Teseptimavirus fiber family. Homotrimer.

The protein localises to the virion. Its function is as follows. Functions as a receptor binding protein (RBP) and probably mediates the attachment to the host capsular exopolysaccharides. Displays a depolymerase activity that specifically degrades the KN1-type polysaccharides of Klebsiella pneumoniae capsule, which allows the phage to reach the host cell membrane and bind the entry receptor. The chain is Depolymerase, capsule KN1-specific from Klebsiella pneumoniae (Bacteriophage KN1-1).